The primary structure comprises 254 residues: Geranylgeranylglyceryl phosphate synthase (254 aa).

Asp28 and Ser57 together coordinate Mg(2+). Sn-glycerol 1-phosphate contacts are provided by residues 176–182, 207–208, and 229–230; these read YLEAGSG, GG, and GT.

This sequence belongs to the GGGP/HepGP synthase family. Group II subfamily. Requires Mg(2+) as cofactor.

Its subcellular location is the cytoplasm. The enzyme catalyses sn-glycerol 1-phosphate + (2E,6E,10E)-geranylgeranyl diphosphate = sn-3-O-(geranylgeranyl)glycerol 1-phosphate + diphosphate. The protein operates within membrane lipid metabolism; glycerophospholipid metabolism. In terms of biological role, prenyltransferase that catalyzes the transfer of the geranylgeranyl moiety of geranylgeranyl diphosphate (GGPP) to the C3 hydroxyl of sn-glycerol-1-phosphate (G1P). This reaction is the first ether-bond-formation step in the biosynthesis of archaeal membrane lipids. The protein is Geranylgeranylglyceryl phosphate synthase of Pyrococcus horikoshii (strain ATCC 700860 / DSM 12428 / JCM 9974 / NBRC 100139 / OT-3).